Reading from the N-terminus, the 142-residue chain is Hemoglobin subunit alpha (142 aa).

One can recognise a Globin domain in the interval 2 to 142 (VLSPADKTNV…VSTVLTSKYR (141 aa)). S4 carries the post-translational modification Phosphoserine. The residue at position 8 (K8) is an N6-succinyllysine. A Phosphothreonine modification is found at T9. At K12 the chain carries N6-succinyllysine. The residue at position 17 (K17) is an N6-acetyllysine; alternate. K17 is modified (N6-succinyllysine; alternate). Y25 is subject to Phosphotyrosine. S36 carries the post-translational modification Phosphoserine. At K41 the chain carries N6-succinyllysine. A Phosphoserine modification is found at S50. H59 serves as a coordination point for O2. H88 serves as a coordination point for heme b. S103 carries the phosphoserine modification. T109 carries the post-translational modification Phosphothreonine. Position 125 is a phosphoserine (S125). 2 positions are modified to phosphothreonine: T135 and T138. Position 139 is a phosphoserine (S139).

Belongs to the globin family. In terms of assembly, heterotetramer of two alpha chains and two beta chains. As to expression, red blood cells.

Its function is as follows. Involved in oxygen transport from the lung to the various peripheral tissues. Hemopressin acts as an antagonist peptide of the cannabinoid receptor CNR1. Hemopressin-binding efficiently blocks cannabinoid receptor CNR1 and subsequent signaling. The chain is Hemoglobin subunit alpha (HBA) from Ailurus fulgens (Himalayan red panda).